The following is a 243-amino-acid chain: Carboxy-S-adenosyl-L-methionine synthase (243 aa).

Residues Y40, 65 to 67 (GCS), 90 to 91 (DN), 118 to 119 (DI), N133, and R200 contribute to the S-adenosyl-L-methionine site.

This sequence belongs to the class I-like SAM-binding methyltransferase superfamily. Cx-SAM synthase family. Homodimer.

It carries out the reaction prephenate + S-adenosyl-L-methionine = carboxy-S-adenosyl-L-methionine + 3-phenylpyruvate + H2O. In terms of biological role, catalyzes the conversion of S-adenosyl-L-methionine (SAM) to carboxy-S-adenosyl-L-methionine (Cx-SAM). The protein is Carboxy-S-adenosyl-L-methionine synthase of Shewanella woodyi (strain ATCC 51908 / MS32).